Consider the following 188-residue polypeptide: Elongation factor P (188 aa).

It belongs to the elongation factor P family.

It localises to the cytoplasm. Its pathway is protein biosynthesis; polypeptide chain elongation. Functionally, involved in peptide bond synthesis. Stimulates efficient translation and peptide-bond synthesis on native or reconstituted 70S ribosomes in vitro. Probably functions indirectly by altering the affinity of the ribosome for aminoacyl-tRNA, thus increasing their reactivity as acceptors for peptidyl transferase. The polypeptide is Elongation factor P (Anaplasma marginale (strain St. Maries)).